Consider the following 71-residue polypeptide: Probable ribosome maturation protein RlbA (71 aa).

Residues 12 to 69 form the S4 RNA-binding domain; that stretch reads ITLGQFLKLADVIQSGGMAKWFLSEHEVLVNDEPDNRRGRKLYVGDVVEIEGFGSFQV.

Its function is as follows. May assist in the assembly of the 50S subunit. In Bacillus subtilis (strain 168), this protein is Probable ribosome maturation protein RlbA.